A 77-amino-acid polypeptide reads, in one-letter code: MAASREFIICCFLTLLLCNFFMRVESGAAADVSRGGCGGGDGSLGDDNERCVEAVKEDDDDDVDDVYKVINKMRIYA.

A signal peptide spans 1 to 29; the sequence is MAASREFIICCFLTLLLCNFFMRVESGAA. Cys37 and Cys51 are disulfide-bonded.

The protein belongs to the plant rapid alkalinization factor (RALF) family.

It localises to the secreted. Functionally, cell signaling peptide that may regulate plant stress, growth, and development. Mediates a rapid alkalinization of extracellular space by mediating a transient increase in the cytoplasmic Ca(2+) concentration leading to a calcium-dependent signaling events through a cell surface receptor and a concomitant activation of some intracellular mitogen-activated protein kinases. The chain is Protein RALF-like 17 (RALFL17) from Arabidopsis thaliana (Mouse-ear cress).